Consider the following 158-residue polypeptide: NADH-quinone oxidoreductase subunit B (158 aa).

Positions 37, 38, 102, and 132 each coordinate [4Fe-4S] cluster.

Belongs to the complex I 20 kDa subunit family. NDH-1 is composed of 14 different subunits. Subunits NuoB, C, D, E, F, and G constitute the peripheral sector of the complex. [4Fe-4S] cluster is required as a cofactor.

It localises to the cell inner membrane. The catalysed reaction is a quinone + NADH + 5 H(+)(in) = a quinol + NAD(+) + 4 H(+)(out). Its function is as follows. NDH-1 shuttles electrons from NADH, via FMN and iron-sulfur (Fe-S) centers, to quinones in the respiratory chain. The immediate electron acceptor for the enzyme in this species is believed to be ubiquinone. Couples the redox reaction to proton translocation (for every two electrons transferred, four hydrogen ions are translocated across the cytoplasmic membrane), and thus conserves the redox energy in a proton gradient. The protein is NADH-quinone oxidoreductase subunit B of Halorhodospira halophila (strain DSM 244 / SL1) (Ectothiorhodospira halophila (strain DSM 244 / SL1)).